A 157-amino-acid chain; its full sequence is Endoribonuclease YbeY (157 aa).

Residues H118, H122, and H128 each contribute to the Zn(2+) site.

Belongs to the endoribonuclease YbeY family. It depends on Zn(2+) as a cofactor.

It is found in the cytoplasm. Its function is as follows. Single strand-specific metallo-endoribonuclease involved in late-stage 70S ribosome quality control and in maturation of the 3' terminus of the 16S rRNA. This chain is Endoribonuclease YbeY, found in Shewanella loihica (strain ATCC BAA-1088 / PV-4).